We begin with the raw amino-acid sequence, 108 residues long: Nitrite reductase (NADH) small subunit (108 aa).

It to B.subtilis NasE. As to quaternary structure, associates with NirB.

It localises to the cytoplasm. It catalyses the reaction NH4(+) + 3 NAD(+) + 2 H2O = nitrite + 3 NADH + 5 H(+). Required for activity of the reductase. The chain is Nitrite reductase (NADH) small subunit (nirD) from Escherichia coli O157:H7.